Here is a 192-residue protein sequence, read N- to C-terminus: Adapter protein MecA (192 aa).

Belongs to the MecA family. In terms of assembly, homodimer.

Its function is as follows. Enables the recognition and targeting of unfolded and aggregated proteins to the ClpC protease or to other proteins involved in proteolysis. Acts negatively in the development of competence by binding ComK and recruiting it to the ClpCP protease. When overexpressed, inhibits sporulation. Also involved in Spx degradation by ClpC. The sequence is that of Adapter protein MecA from Oceanobacillus iheyensis (strain DSM 14371 / CIP 107618 / JCM 11309 / KCTC 3954 / HTE831).